The primary structure comprises 416 residues: Serine hydroxymethyltransferase (416 aa).

(6S)-5,6,7,8-tetrahydrofolate contacts are provided by residues Leu119 and 123–125; that span reads GHL. At Lys228 the chain carries N6-(pyridoxal phosphate)lysine. Position 243 (Glu243) interacts with (6S)-5,6,7,8-tetrahydrofolate.

This sequence belongs to the SHMT family. Homodimer. The cofactor is pyridoxal 5'-phosphate.

Its subcellular location is the cytoplasm. It catalyses the reaction (6R)-5,10-methylene-5,6,7,8-tetrahydrofolate + glycine + H2O = (6S)-5,6,7,8-tetrahydrofolate + L-serine. Its pathway is one-carbon metabolism; tetrahydrofolate interconversion. The protein operates within amino-acid biosynthesis; glycine biosynthesis; glycine from L-serine: step 1/1. In terms of biological role, catalyzes the reversible interconversion of serine and glycine with tetrahydrofolate (THF) serving as the one-carbon carrier. This reaction serves as the major source of one-carbon groups required for the biosynthesis of purines, thymidylate, methionine, and other important biomolecules. Also exhibits THF-independent aldolase activity toward beta-hydroxyamino acids, producing glycine and aldehydes, via a retro-aldol mechanism. In Desulforapulum autotrophicum (strain ATCC 43914 / DSM 3382 / VKM B-1955 / HRM2) (Desulfobacterium autotrophicum), this protein is Serine hydroxymethyltransferase.